We begin with the raw amino-acid sequence, 423 residues long: Imidazolonepropionase (423 aa).

Fe(3+)-binding residues include His-78 and His-80. Zn(2+) contacts are provided by His-78 and His-80. The 4-imidazolone-5-propanoate site is built by Arg-87, Tyr-150, and His-183. Tyr-150 serves as a coordination point for N-formimidoyl-L-glutamate. His-247 provides a ligand contact to Fe(3+). His-247 is a Zn(2+) binding site. A 4-imidazolone-5-propanoate-binding site is contributed by Glu-250. Asp-322 lines the Fe(3+) pocket. Asp-322 provides a ligand contact to Zn(2+). 2 residues coordinate N-formimidoyl-L-glutamate: Asn-324 and Gly-326. A 4-imidazolone-5-propanoate-binding site is contributed by Ser-327.

Belongs to the metallo-dependent hydrolases superfamily. HutI family. Requires Zn(2+) as cofactor. The cofactor is Fe(3+).

The protein localises to the cytoplasm. It carries out the reaction 4-imidazolone-5-propanoate + H2O = N-formimidoyl-L-glutamate. Its pathway is amino-acid degradation; L-histidine degradation into L-glutamate; N-formimidoyl-L-glutamate from L-histidine: step 3/3. Functionally, catalyzes the hydrolytic cleavage of the carbon-nitrogen bond in imidazolone-5-propanoate to yield N-formimidoyl-L-glutamate. It is the third step in the universal histidine degradation pathway. This chain is Imidazolonepropionase, found in Bacillus cereus (strain ATCC 10987 / NRS 248).